Consider the following 153-residue polypeptide: 3-hydroxyacyl-[acyl-carrier-protein] dehydratase FabZ (153 aa).

His-53 is a catalytic residue.

The protein belongs to the thioester dehydratase family. FabZ subfamily.

The protein resides in the cytoplasm. It carries out the reaction a (3R)-hydroxyacyl-[ACP] = a (2E)-enoyl-[ACP] + H2O. Functionally, involved in unsaturated fatty acids biosynthesis. Catalyzes the dehydration of short chain beta-hydroxyacyl-ACPs and long chain saturated and unsaturated beta-hydroxyacyl-ACPs. In Lawsonia intracellularis (strain PHE/MN1-00), this protein is 3-hydroxyacyl-[acyl-carrier-protein] dehydratase FabZ.